The sequence spans 102 residues: Small ribosomal subunit protein eS24 (102 aa).

Belongs to the eukaryotic ribosomal protein eS24 family.

The polypeptide is Small ribosomal subunit protein eS24 (Methanococcus aeolicus (strain ATCC BAA-1280 / DSM 17508 / OCM 812 / Nankai-3)).